A 311-amino-acid polypeptide reads, in one-letter code: tRNA-cytidine(32) 2-sulfurtransferase (311 aa).

Positions 47–52 match the PP-loop motif motif; sequence SGGKDS. 3 residues coordinate [4Fe-4S] cluster: cysteine 122, cysteine 125, and cysteine 213.

It belongs to the TtcA family. As to quaternary structure, homodimer. Requires Mg(2+) as cofactor. The cofactor is [4Fe-4S] cluster.

The protein resides in the cytoplasm. The catalysed reaction is cytidine(32) in tRNA + S-sulfanyl-L-cysteinyl-[cysteine desulfurase] + AH2 + ATP = 2-thiocytidine(32) in tRNA + L-cysteinyl-[cysteine desulfurase] + A + AMP + diphosphate + H(+). It functions in the pathway tRNA modification. Functionally, catalyzes the ATP-dependent 2-thiolation of cytidine in position 32 of tRNA, to form 2-thiocytidine (s(2)C32). The sulfur atoms are provided by the cysteine/cysteine desulfurase (IscS) system. The chain is tRNA-cytidine(32) 2-sulfurtransferase from Escherichia coli O139:H28 (strain E24377A / ETEC).